Here is a 444-residue protein sequence, read N- to C-terminus: UDP-N-acetylmuramate--L-alanine ligase (444 aa).

An ATP-binding site is contributed by 110-116; the sequence is GAHGKTS.

This sequence belongs to the MurCDEF family.

Its subcellular location is the cytoplasm. The enzyme catalyses UDP-N-acetyl-alpha-D-muramate + L-alanine + ATP = UDP-N-acetyl-alpha-D-muramoyl-L-alanine + ADP + phosphate + H(+). It participates in cell wall biogenesis; peptidoglycan biosynthesis. Its function is as follows. Cell wall formation. This chain is UDP-N-acetylmuramate--L-alanine ligase, found in Streptococcus pneumoniae (strain Hungary19A-6).